A 367-amino-acid polypeptide reads, in one-letter code: Histidinol-phosphate aminotransferase (367 aa).

Lys-230 is subject to N6-(pyridoxal phosphate)lysine.

Belongs to the class-II pyridoxal-phosphate-dependent aminotransferase family. Histidinol-phosphate aminotransferase subfamily. In terms of assembly, homodimer. Pyridoxal 5'-phosphate is required as a cofactor.

It catalyses the reaction L-histidinol phosphate + 2-oxoglutarate = 3-(imidazol-4-yl)-2-oxopropyl phosphate + L-glutamate. It participates in amino-acid biosynthesis; L-histidine biosynthesis; L-histidine from 5-phospho-alpha-D-ribose 1-diphosphate: step 7/9. This chain is Histidinol-phosphate aminotransferase, found in Thermobifida fusca (strain YX).